The following is a 262-amino-acid chain: Mediator of RNA polymerase II transcription subunit 8 (262 aa).

Residues 168 to 211 are a coiled coil; sequence LEEKEMGVKNVITGLKRQLDEGDEEDEEEEEEEEDMQGEEMEVV. The interval 183-206 is disordered; that stretch reads KRQLDEGDEEDEEEEEEEEDMQGE. Residues 188 to 206 are compositionally biased toward acidic residues; that stretch reads EGDEEDEEEEEEEEDMQGE.

Belongs to the Mediator complex subunit 8 family. As to quaternary structure, component of the Mediator complex.

The protein localises to the nucleus. Its function is as follows. Component of the Mediator complex, a coactivator involved in the regulated transcription of nearly all RNA polymerase II-dependent genes. Mediator functions as a bridge to convey information from gene-specific regulatory proteins to the basal RNA polymerase II transcription machinery. Mediator is recruited to promoters by direct interactions with regulatory proteins and serves as a scaffold for the assembly of a functional preinitiation complex with RNA polymerase II and the general transcription factors. This chain is Mediator of RNA polymerase II transcription subunit 8 (MED8), found in Coccidioides immitis (strain RS) (Valley fever fungus).